A 118-amino-acid polypeptide reads, in one-letter code: Large ribosomal subunit protein bL20c (118 aa).

It belongs to the bacterial ribosomal protein bL20 family.

The protein localises to the plastid. The protein resides in the chloroplast. Binds directly to 23S ribosomal RNA and is necessary for the in vitro assembly process of the 50S ribosomal subunit. It is not involved in the protein synthesizing functions of that subunit. In Adiantum capillus-veneris (Maidenhair fern), this protein is Large ribosomal subunit protein bL20c.